The following is an 82-amino-acid chain: Probable tautomerase XF_1725 (82 aa).

Residue P2 is the Proton acceptor; via imino nitrogen of the active site.

This sequence belongs to the 4-oxalocrotonate tautomerase family.

The chain is Probable tautomerase XF_1725 from Xylella fastidiosa (strain 9a5c).